A 628-amino-acid polypeptide reads, in one-letter code: Nuclear receptor subfamily 4 group A member 3 (628 aa).

The activation function (AF)-1 domain stretch occupies residues 1–112 (MPCVQAQYSP…HHHHHHHHHH (112 aa)). Residues 1 to 140 (MPCVQAQYSP…PSTSMYFKQS (140 aa)) are required for DNA-PK heterotrimer. Positions 1–293 (MPCVQAQYSP…NRSSSSGEGT (293 aa)) are interaction with NCOA1, NCOA2, NCOA3 and KAT2B. 2 disordered regions span residues 96–163 (HGYH…DELP) and 269–290 (ASSL…SSSG). A compositionally biased stretch (basic residues) spans 97-113 (GYHHHHHHHHHHHHHHQ). The segment covering 142–151 (PSTPTTPGFP) has biased composition (pro residues). The segment covering 270–289 (SSLLGESPSLPSPPNRSSSS) has biased composition (low complexity). Positions 291–366 (EGTCAVCGDN…VGMVKEVVRT (76 aa)) form a DNA-binding region, nuclear receptor. 2 NR C4-type zinc fingers span residues 294–314 (CAVC…CEGC) and 330–354 (CLAN…FQKC). A disordered region spans residues 366-396 (TDSLKGRRGRLPSKPKSPLQQEPSQPSPPSP). Residues 379–389 (KPKSPLQQEPS) show a composition bias toward low complexity. The interval 381-628 (KSPLQQEPSQ…DKLFLDTLPF (248 aa)) is interaction with KAT2B. The region spanning 396-625 (PPICMMNALV…SVIDKLFLDT (230 aa)) is the NR LBD domain.

Belongs to the nuclear hormone receptor family. NR4 subfamily. As to quaternary structure, interacts with SIX3 (via homeobox); differentially regulates the transcriptional activities of NR4A3. Interacts with NR3C1 (via nuclear receptor DNA-binding domain); the interactions represses transcription activity of NR4A3 on the POMC promoter Nur response element (NurRE). Interacts with TRIM28; the interactions potentiates NR4A3 activity on NurRE promoter. Binds DNA as a monomer and homodimer. Interacts with PARP1; activates PARP1 by improving acetylation of PARP1 and suppressing the interaction between PARP1 and SIRT1. Interacts with the constituents of DNA-PK heterotrimer PRKDC, XRCC6 and XRCC5; phosphorylates and prevents NR4A3 ubiquitinylation and degradation. Interacts with NCOA2; potentiates the activity of the NR4A3. Interacts with NCOA1, NCOA3, MED1 and KAT2B. Interacts with EP300 and NCOA2; mediates the recruitment of MED1 in the coactivator complex. Post-translationally, phosphorylated by PRKDC. Expressed at high levels in cultured apoptotic neuronal cells and fetal brain, and at low level in adult brain.

Its subcellular location is the nucleus. Functionally, transcriptional activator that binds to regulatory elements in promoter regions in a cell- and response element (target)-specific manner. Induces gene expression by binding as monomers to the NR4A1 response element (NBRE) 5'-AAAAGGTCA-3' site and as homodimers to the Nur response element (NurRE) site in the promoter of their regulated target genes. Plays a role in the regulation of proliferation, survival and differentiation of many different cell types and also in metabolism and inflammation. Mediates proliferation of vascular smooth muscle, myeloid progenitor cell and type B pancreatic cells; promotes mitogen-induced vascular smooth muscle cell proliferation through transactivation of SKP2 promoter by binding a NBRE site. Upon PDGF stimulation, stimulates vascular smooth muscle cell proliferation by regulating CCND1 and CCND2 expression. In islets, induces type B pancreatic cell proliferation through up-regulation of genes that activate cell cycle, as well as genes that cause degradation of the CDKN1A. Negatively regulates myeloid progenitor cell proliferation by repressing RUNX1 in a NBRE site-independent manner. During inner ear, plays a role as a key mediator of the proliferative growth phase of semicircular canal development. Also mediates survival of neuron and smooth muscle cells; mediates CREB-induced neuronal survival, and during hippocampus development, plays a critical role in pyramidal cell survival and axonal guidance. Is required for S phase entry of the cell cycle and survival of smooth muscle cells by inducing CCND1, resulting in RB1 phosphorylation. Binds to NBRE motif in CCND1 promoter, resulting in the activation of the promoter and CCND1 transcription. Also plays a role in inflammation; Upon TNF stimulation, mediates monocyte adhesion by inducing the expression of VCAM1 and ICAM1 by binding to the NBRE consensus site. In mast cells activated by Fc-epsilon receptor cross-linking, promotes the synthesis and release of cytokines but impairs events leading to degranulation. Also plays a role in metabolism; by modulating feeding behavior; and by playing a role in energy balance by inhibiting the glucocorticoid-induced orexigenic neuropeptides AGRP expression, at least in part by forming a complex with activated NR3C1 on the AGRP-glucocorticoid response element (GRE), and thus weakening the DNA binding activity of NR3C1. Upon catecholamines stimulation, regulates gene expression that controls oxidative metabolism in skeletal muscle. Plays a role in glucose transport by regulating translocation of the SLC2A4 glucose transporter to the cell surface. Finally, during gastrulation plays a crucial role in the formation of anterior mesoderm by controlling cell migration. Also participates in cardiac hypertrophy by activating PARP1. This chain is Nuclear receptor subfamily 4 group A member 3 (Nr4a3), found in Rattus norvegicus (Rat).